Here is a 349-residue protein sequence, read N- to C-terminus: Phosphate acyltransferase (349 aa).

Belongs to the PlsX family. In terms of assembly, homodimer. Probably interacts with PlsY.

The protein resides in the cytoplasm. It carries out the reaction a fatty acyl-[ACP] + phosphate = an acyl phosphate + holo-[ACP]. Its pathway is lipid metabolism; phospholipid metabolism. Catalyzes the reversible formation of acyl-phosphate (acyl-PO(4)) from acyl-[acyl-carrier-protein] (acyl-ACP). This enzyme utilizes acyl-ACP as fatty acyl donor, but not acyl-CoA. This Akkermansia muciniphila (strain ATCC BAA-835 / DSM 22959 / JCM 33894 / BCRC 81048 / CCUG 64013 / CIP 107961 / Muc) protein is Phosphate acyltransferase.